Reading from the N-terminus, the 326-residue chain is Phospho-N-acetylmuramoyl-pentapeptide-transferase (326 aa).

The next 9 helical transmembrane spans lie at 3 to 23 (ISISAGIVTFLLTLVEIPAFI), 51 to 71 (TMGGLVFLITSVLVAFFFALF), 79 to 99 (VGMILFILVLYGLVGFLDDFL), 115 to 135 (LALQLLGGVIFYLFYERGGDI), 138 to 158 (VFGYPVHLGFFYIFFALFWLV), 169 to 189 (GVDGLASISVVISLSAYGVIA), 195 to 215 (MDILLVILAMIGGLLGFFIFN), 221 to 243 (VFMGDVGSLALGGMLAAISMALH), and 306 to 326 (FFFWGVGLLASLLTLAILYLM).

Belongs to the glycosyltransferase 4 family. MraY subfamily. Requires Mg(2+) as cofactor.

It is found in the cell membrane. It carries out the reaction UDP-N-acetyl-alpha-D-muramoyl-L-alanyl-gamma-D-glutamyl-L-lysyl-D-alanyl-D-alanine + di-trans,octa-cis-undecaprenyl phosphate = Mur2Ac(oyl-L-Ala-gamma-D-Glu-L-Lys-D-Ala-D-Ala)-di-trans,octa-cis-undecaprenyl diphosphate + UMP. Its pathway is cell wall biogenesis; peptidoglycan biosynthesis. Its function is as follows. Catalyzes the initial step of the lipid cycle reactions in the biosynthesis of the cell wall peptidoglycan: transfers peptidoglycan precursor phospho-MurNAc-pentapeptide from UDP-MurNAc-pentapeptide onto the lipid carrier undecaprenyl phosphate, yielding undecaprenyl-pyrophosphoryl-MurNAc-pentapeptide, known as lipid I. In Streptococcus pneumoniae (strain 70585), this protein is Phospho-N-acetylmuramoyl-pentapeptide-transferase.